We begin with the raw amino-acid sequence, 345 residues long: MRLTMRWFGPSDKVKLEYIKQIPGMKGIVSAIYDVAVGGVWPKEKILALKNNIERHGLTLDVIESVPVHEDIKLGKPTRDRYIENYKQTLRHLAECGIDTVCYNFMPVFDWTRSQLDFKLEDGSEALIYEEDVISRTNPLSGELELPGWDTSYENESLKGVLQAYKKISEEDLWDHLTYFVQAIMPVADEVGIKMAIHPDDPPWSIFGLPRIVTNKANLERLLSLYDSPNHGITMCSGSLGANEANDLPEMIRHFGGQGRIHFAHARNIKRTGPRSFQESAHLSEAGSVNMVAMLKAYHDIGFTGPLRPDHGRMIWGEKGRPGYGLYDRALGATYLNGIWEAVSS.

The protein belongs to the mannonate dehydratase family. Requires Fe(2+) as cofactor. The cofactor is Mn(2+).

It carries out the reaction D-mannonate = 2-dehydro-3-deoxy-D-gluconate + H2O. Its pathway is carbohydrate metabolism; pentose and glucuronate interconversion. Functionally, catalyzes the dehydration of D-mannonate. The polypeptide is Mannonate dehydratase 2 (uxuA2) (Halalkalibacterium halodurans (strain ATCC BAA-125 / DSM 18197 / FERM 7344 / JCM 9153 / C-125) (Bacillus halodurans)).